Consider the following 98-residue polypeptide: MADWVREAADGSLTLTLHIQPGARQTGFAGLHGEAMKIRLAAPPVDGKANAALCAFLADFCEVPKSAVTLVSGETSRAKRVRVETKTPGLAGRLRALG.

This sequence belongs to the UPF0235 family.

This Azoarcus sp. (strain BH72) protein is UPF0235 protein azo3464.